A 63-amino-acid chain; its full sequence is MAKLLAVFLVLLIAALVCEQALACTPGSRKYDGCNWCTCSSGGAWICTLKYCPPSSGGGLTFA.

An N-terminal signal peptide occupies residues 1-23 (MAKLLAVFLVLLIAALVCEQALA). Disulfide bonds link cysteine 24/cysteine 39, cysteine 34/cysteine 52, and cysteine 37/cysteine 47. The Pacifastin domain occupies 24–55 (CTPGSRKYDGCNWCTCSSGGAWICTLKYCPPS).

It belongs to the protease inhibitor I19 family. Expressed in hemolymph, ovaries, testes and fat body of adults but are absent in the gut. Also present in larval hemolymph and fat body.

Its subcellular location is the secreted. Its function is as follows. In vitro, active against alpha-chymotrypsin. The sequence is that of Serine protease inhibitor 3 from Schistocerca gregaria (Desert locust).